Here is a 74-residue protein sequence, read N- to C-terminus: Apolipoprotein C-I, acidic form (74 aa).

Positions methionine 1 to glycine 26 are cleaved as a signal peptide.

Belongs to the apolipoprotein C1 family.

It is found in the secreted. This Colobus guereza (Mantled guereza) protein is Apolipoprotein C-I, acidic form (APOC1A).